A 300-amino-acid chain; its full sequence is Tyrosine phosphatase-like protein J1 (300 aa).

One can recognise a Tyrosine-protein phosphatase domain in the interval 27 to 294 (LKREHEHIMQ…IFCYFTVLQF (268 aa)).

Belongs to the protein-tyrosine phosphatase family.

This Microplitis demolitor (Parasitoid wasp) protein is Tyrosine phosphatase-like protein J1 (J1).